The sequence spans 353 residues: MTLERTGRDEEKALTQPPSGHSSVQAGKVGVLLVNLGTPDGTDYWPMRRYLGEFLSDRRVIEWPRAVWYPILYGIILARRPKKSGALYAKIWNREQNESPLRTFTRAQGQKLATALADKENVIVDWAMRYGSPSIETVTKSLIERGCDRIVMFPLYPQYSATTTATVNDKFFEALIEMRHQPAVRTVPAYPEEPVYIDALVRSIERHLATLDFEPEVVVASYHGIPQSYARRGDPYYEQCLATTARVRERLGWDEKKLITTFQSRFGPEEWLQPYTDKTVEQLARDGVRSIAVINPGFVSDCLETLEEIAVEADRTFREAGGKNFTHIPCLNDSDEGMAVIESLIRREMSGWA.

Positions 1-13 are enriched in basic and acidic residues; it reads MTLERTGRDEEKA. Positions 1–23 are disordered; sequence MTLERTGRDEEKALTQPPSGHSS. The Fe cation site is built by histidine 223 and glutamate 304.

Belongs to the ferrochelatase family.

It is found in the cytoplasm. The catalysed reaction is heme b + 2 H(+) = protoporphyrin IX + Fe(2+). The protein operates within porphyrin-containing compound metabolism; protoheme biosynthesis; protoheme from protoporphyrin-IX: step 1/1. In terms of biological role, catalyzes the ferrous insertion into protoporphyrin IX. This Chelativorans sp. (strain BNC1) protein is Ferrochelatase.